The sequence spans 308 residues: D-2-hydroxyacid dehydrogenase (308 aa).

Residues Thr145–Leu146, Val224–Arg226, and Asp250 each bind NAD(+). Residue Arg226 is part of the active site. Residue Glu255 is part of the active site. Catalysis depends on His274, which acts as the Proton donor. Residue His274–Ala277 coordinates NAD(+).

The protein belongs to the D-isomer specific 2-hydroxyacid dehydrogenase family. In terms of assembly, homotetramer.

Its function is as follows. Catalyzes the stereospecific NAD(P)H-dependent reduction of 2-ketocarboxylic acids into the corresponding D-2-hydroxycarboxylic acids. Can use both NADPH or NADH as reductant, displaying a marked preference for NADPH over NADH. Shows a broad substrate specificity, although it displays a marked preference for the 2-ketocarboxylic acids having an unbranched chain of 4-5 carbon atoms. The polypeptide is D-2-hydroxyacid dehydrogenase (ddh) (Haloferax mediterranei (strain ATCC 33500 / DSM 1411 / JCM 8866 / NBRC 14739 / NCIMB 2177 / R-4) (Halobacterium mediterranei)).